We begin with the raw amino-acid sequence, 289 residues long: Nucleotide-binding protein CHY_0272 (289 aa).

Position 8–15 (8–15 (GLSGAGKT)) interacts with ATP. 59-62 (DVRG) is a GTP binding site.

The protein belongs to the RapZ-like family.

Its function is as follows. Displays ATPase and GTPase activities. The sequence is that of Nucleotide-binding protein CHY_0272 from Carboxydothermus hydrogenoformans (strain ATCC BAA-161 / DSM 6008 / Z-2901).